The sequence spans 384 residues: uncharacterized protein (384 aa).

Transmembrane regions (helical) follow at residues Leu-22–Lys-42, Leu-52–Val-72, Ala-81–Asn-101, Met-106–Ile-126, Phe-143–Trp-163, Leu-164–Leu-184, Leu-202–Leu-222, Gly-240–Gly-260, Val-276–Ser-296, Ala-299–Phe-319, Val-327–Ala-347, and Ile-352–Leu-372.

The protein belongs to the major facilitator superfamily.

The protein resides in the membrane. This is an uncharacterized protein from Yersinia pestis.